A 56-amino-acid polypeptide reads, in one-letter code: Small ribosomal subunit protein uS14 (56 aa).

Residues C21, C24, C39, and C42 each contribute to the Zn(2+) site.

The protein belongs to the universal ribosomal protein uS14 family. As to quaternary structure, component of the small ribosomal subunit (SSU). Mature N.crassa ribosomes consist of a small (40S) and a large (60S) subunit. The 40S small subunit contains 1 molecule of ribosomal RNA (18S rRNA) and at least 32 different proteins. The large 60S subunit contains 3 rRNA molecules (26S, 5.8S and 5S rRNA) and at least 42 different proteins. Requires Zn(2+) as cofactor.

It is found in the cytoplasm. Component of the ribosome, a large ribonucleoprotein complex responsible for the synthesis of proteins in the cell. The small ribosomal subunit (SSU) binds messenger RNAs (mRNAs) and translates the encoded message by selecting cognate aminoacyl-transfer RNA (tRNA) molecules. The large subunit (LSU) contains the ribosomal catalytic site termed the peptidyl transferase center (PTC), which catalyzes the formation of peptide bonds, thereby polymerizing the amino acids delivered by tRNAs into a polypeptide chain. The nascent polypeptides leave the ribosome through a tunnel in the LSU and interact with protein factors that function in enzymatic processing, targeting, and the membrane insertion of nascent chains at the exit of the ribosomal tunnel. In Neurospora crassa (strain ATCC 24698 / 74-OR23-1A / CBS 708.71 / DSM 1257 / FGSC 987), this protein is Small ribosomal subunit protein uS14 (rps-29).